The sequence spans 381 residues: Putrescine N-methyltransferase 3 (381 aa).

Residues 21-81 (MNGYQNGTSK…TISHDNGNEL (61 aa)) are disordered. Polar residues-rich tracts occupy residues 23–39 (GYQN…QNGT) and 46–81 (HQNG…GNEL). The PABS domain occupies 92 to 329 (PGWFSEFSAL…GVIGYMLCST (238 aa)). Residues Q123, E198, and 229-230 (DG) contribute to the S-adenosyl-L-methionine site. The Proton acceptor role is filled by D248. Residue Y317 coordinates S-adenosyl-L-methionine.

The protein belongs to the class I-like SAM-binding methyltransferase superfamily. Putrescine methyltransferase family. Predominantly expressed in roots.

The catalysed reaction is putrescine + S-adenosyl-L-methionine = N-methylputrescine + S-adenosyl-L-homocysteine + H(+). It participates in alkaloid biosynthesis; nicotine biosynthesis. Its function is as follows. Involved in the biosynthesis of pyridine alkaloid natural products, leading mainly to the production of anabasine, anatabine, nicotine and nornicotine, effective deterrents against herbivores with antiparasitic and pesticide properties (neurotoxins); nornicotine serves as the precursor in the synthesis of the carcinogen compound N'-nitrosonornicotine (NNN). Methyltransferase that mediates the conversion of putrescine to N-methylputrescine. Promotes leaves ripening. This Nicotiana tabacum (Common tobacco) protein is Putrescine N-methyltransferase 3.